The chain runs to 201 residues: Large ribosomal subunit protein uL4 (201 aa).

Positions 43–71 (TRAQKTRSDVSGGGKKPWRQKGTGRARSG) are disordered.

It belongs to the universal ribosomal protein uL4 family. In terms of assembly, part of the 50S ribosomal subunit.

In terms of biological role, one of the primary rRNA binding proteins, this protein initially binds near the 5'-end of the 23S rRNA. It is important during the early stages of 50S assembly. It makes multiple contacts with different domains of the 23S rRNA in the assembled 50S subunit and ribosome. Functionally, forms part of the polypeptide exit tunnel. This is Large ribosomal subunit protein uL4 from Psychromonas ingrahamii (strain DSM 17664 / CCUG 51855 / 37).